The sequence spans 212 residues: V-type ATP synthase subunit E (212 aa).

It belongs to the V-ATPase E subunit family.

Functionally, produces ATP from ADP in the presence of a proton gradient across the membrane. The chain is V-type ATP synthase subunit E from Nitrosococcus oceani (strain ATCC 19707 / BCRC 17464 / JCM 30415 / NCIMB 11848 / C-107).